Consider the following 180-residue polypeptide: tRNA (cytidine(56)-2'-O)-methyltransferase (180 aa).

S-adenosyl-L-methionine contacts are provided by residues Leu84 and 112–116 (GAEKV).

Belongs to the aTrm56 family. Homodimer.

Its subcellular location is the cytoplasm. The catalysed reaction is cytidine(56) in tRNA + S-adenosyl-L-methionine = 2'-O-methylcytidine(56) in tRNA + S-adenosyl-L-homocysteine + H(+). In terms of biological role, specifically catalyzes the AdoMet-dependent 2'-O-ribose methylation of cytidine at position 56 in tRNAs. The sequence is that of tRNA (cytidine(56)-2'-O)-methyltransferase from Natronomonas pharaonis (strain ATCC 35678 / DSM 2160 / CIP 103997 / JCM 8858 / NBRC 14720 / NCIMB 2260 / Gabara) (Halobacterium pharaonis).